Consider the following 350-residue polypeptide: Glycerol-3-phosphate dehydrogenase [NAD(+)], cytoplasmic (350 aa).

NAD(+) contacts are provided by residues 11–16 (GSGNWG), Phe98, Lys121, and Ala155. Lys121 is a substrate binding site. Residue Lys206 is the Proton acceptor of the active site. Residues Arg270 and Gln299 each contribute to the NAD(+) site. 270–271 (RN) lines the substrate pocket.

The protein belongs to the NAD-dependent glycerol-3-phosphate dehydrogenase family. As to quaternary structure, homodimer.

The protein localises to the cytoplasm. The enzyme catalyses sn-glycerol 3-phosphate + NAD(+) = dihydroxyacetone phosphate + NADH + H(+). The protein operates within phospholipid metabolism; alpha-glycerophosphate cycle. The protein is Glycerol-3-phosphate dehydrogenase [NAD(+)], cytoplasmic (Gpdh1) of Drosophila ezoana (Fruit fly).